The primary structure comprises 318 residues: tRNA uridine(34) hydroxylase (318 aa).

Residues 123–217 form the Rhodanese domain; that stretch reads EDDDTVIIDA…YGKDPETKGE (95 aa). Cys-177 functions as the Cysteine persulfide intermediate in the catalytic mechanism.

It belongs to the TrhO family.

It carries out the reaction uridine(34) in tRNA + AH2 + O2 = 5-hydroxyuridine(34) in tRNA + A + H2O. Catalyzes oxygen-dependent 5-hydroxyuridine (ho5U) modification at position 34 in tRNAs. The chain is tRNA uridine(34) hydroxylase from Staphylococcus aureus (strain MSSA476).